The sequence spans 563 residues: NAD-dependent malic enzyme (563 aa).

Tyr101 functions as the Proton donor in the catalytic mechanism. Arg154 is a binding site for NAD(+). The active-site Proton acceptor is Lys172. Residues Glu243, Asp244, and Asp267 each contribute to the a divalent metal cation site. NAD(+) is bound by residues Asp267 and Asn416.

It belongs to the malic enzymes family. As to quaternary structure, homotetramer. Mg(2+) serves as cofactor. The cofactor is Mn(2+).

The catalysed reaction is (S)-malate + NAD(+) = pyruvate + CO2 + NADH. It catalyses the reaction oxaloacetate + H(+) = pyruvate + CO2. The polypeptide is NAD-dependent malic enzyme (Pseudomonas syringae pv. syringae (strain B728a)).